A 260-amino-acid chain; its full sequence is Hydroxyethylthiazole kinase 1 (260 aa).

M39 is a binding site for substrate. Residues R115 and T160 each coordinate ATP. A substrate-binding site is contributed by G187.

Belongs to the Thz kinase family. The cofactor is Mg(2+).

It catalyses the reaction 5-(2-hydroxyethyl)-4-methylthiazole + ATP = 4-methyl-5-(2-phosphooxyethyl)-thiazole + ADP + H(+). Its pathway is cofactor biosynthesis; thiamine diphosphate biosynthesis; 4-methyl-5-(2-phosphoethyl)-thiazole from 5-(2-hydroxyethyl)-4-methylthiazole: step 1/1. Functionally, catalyzes the phosphorylation of the hydroxyl group of 4-methyl-5-beta-hydroxyethylthiazole (THZ). The polypeptide is Hydroxyethylthiazole kinase 1 (Streptococcus pneumoniae (strain ATCC 700669 / Spain 23F-1)).